A 199-amino-acid chain; its full sequence is Nicotinamide riboside kinase 1 (199 aa).

10 to 18 (GVTNSGKTT) is a binding site for ATP. Mg(2+) contacts are provided by Thr17 and Asp36. Asp36 (proton acceptor) is an active-site residue. Substrate-binding positions include 36-39 (DDFF) and 55-56 (YD). Arg128 is an ATP binding site. Substrate is bound by residues Arg129 and 134-135 (YQ). Residues 132 to 134 (RVY) and 172 to 174 (KSE) contribute to the ATP site.

The protein belongs to the uridine kinase family. NRK subfamily. As to quaternary structure, monomer.

It catalyses the reaction beta-nicotinamide D-riboside + ATP = beta-nicotinamide D-ribonucleotide + ADP + H(+). It carries out the reaction beta-D-ribosylnicotinate + ATP = nicotinate beta-D-ribonucleotide + ADP + H(+). Its pathway is cofactor biosynthesis; NAD(+) biosynthesis. Catalyzes the phosphorylation of nicotinamide riboside (NR) and nicotinic acid riboside (NaR) to form nicotinamide mononucleotide (NMN) and nicotinic acid mononucleotide (NaMN). The enzyme also phosphorylates the antitumor drugs tiazofurin and 3-deazaguanosine. The protein is Nicotinamide riboside kinase 1 (NMRK1) of Homo sapiens (Human).